We begin with the raw amino-acid sequence, 141 residues long: Hemoglobin subunit alpha-1 (141 aa).

The 141-residue stretch at Val-1 to Arg-141 folds into the Globin domain. His-58 is a binding site for O2. His-87 is a heme b binding site.

This sequence belongs to the globin family. As to quaternary structure, heterotetramer of two alpha chains and two beta chains. In terms of tissue distribution, red blood cells.

Its function is as follows. Involved in oxygen transport from the lung to the various peripheral tissues. The chain is Hemoglobin subunit alpha-1 from Naja naja (Indian cobra).